A 288-amino-acid polypeptide reads, in one-letter code: Cyclin-dependent kinase 2 homolog (288 aa).

The Protein kinase domain occupies 4–284 (YHGLEKIGEG…AKQALEHAYF (281 aa)). ATP is bound by residues 10–18 (IGEGTYGVV) and Lys-32. Residue Thr-14 is modified to Phosphothreonine. A Phosphotyrosine modification is found at Tyr-15. Asp-125 functions as the Proton acceptor in the catalytic mechanism. Residue Thr-158 is modified to Phosphothreonine.

This sequence belongs to the protein kinase superfamily. CMGC Ser/Thr protein kinase family. CDC2/CDKX subfamily. May form a complex composed of at least the catalytic subunit CRK2 and a cyclin. The cofactor is Mg(2+). Autophosphorylates in presence of cyclin cyc-1 but not in presence of cyclin cyc-3.

The protein resides in the cytoplasm. It carries out the reaction L-seryl-[protein] + ATP = O-phospho-L-seryl-[protein] + ADP + H(+). It catalyses the reaction L-threonyl-[protein] + ATP = O-phospho-L-threonyl-[protein] + ADP + H(+). The enzyme catalyses [DNA-directed RNA polymerase] + ATP = phospho-[DNA-directed RNA polymerase] + ADP + H(+). Its activity is regulated as follows. Phosphorylation at Thr-14 or Tyr-15 inactivates the enzyme, while phosphorylation at Thr-158 activates it. Activated by cyclin cyc-1 in vitro. Activated by cyclin cyc-3 in vitro. Its function is as follows. Serine/threonine-protein kinase. Involved in the control of the cell cycle. Required for entry into S-phase and mitosis. Probable component of the kinase complex that phosphorylates the repetitive C-terminus of RNA polymerase II. In schizonts, phosphorylates ORC1 resulting in its dissociation from DNA, relocalization to the cytoplasm and likely its degradation. The sequence is that of Cyclin-dependent kinase 2 homolog from Plasmodium falciparum (isolate 3D7).